Reading from the N-terminus, the 234-residue chain is Sugar fermentation stimulation protein homolog (234 aa).

It belongs to the SfsA family.

This is Sugar fermentation stimulation protein homolog from Shewanella pealeana (strain ATCC 700345 / ANG-SQ1).